Consider the following 279-residue polypeptide: Putative pyruvate, phosphate dikinase regulatory protein (279 aa).

An ADP-binding site is contributed by 153–160; that stretch reads GVSRTSKT.

It belongs to the pyruvate, phosphate/water dikinase regulatory protein family. PDRP subfamily.

It catalyses the reaction N(tele)-phospho-L-histidyl/L-threonyl-[pyruvate, phosphate dikinase] + ADP = N(tele)-phospho-L-histidyl/O-phospho-L-threonyl-[pyruvate, phosphate dikinase] + AMP + H(+). The catalysed reaction is N(tele)-phospho-L-histidyl/O-phospho-L-threonyl-[pyruvate, phosphate dikinase] + phosphate + H(+) = N(tele)-phospho-L-histidyl/L-threonyl-[pyruvate, phosphate dikinase] + diphosphate. In terms of biological role, bifunctional serine/threonine kinase and phosphorylase involved in the regulation of the pyruvate, phosphate dikinase (PPDK) by catalyzing its phosphorylation/dephosphorylation. The chain is Putative pyruvate, phosphate dikinase regulatory protein from Bradyrhizobium sp. (strain ORS 278).